Reading from the N-terminus, the 296-residue chain is 4-diphosphocytidyl-2-C-methyl-D-erythritol kinase (296 aa).

The active site involves Lys-19. 102 to 112 is a binding site for ATP; it reads PMGAGLGGGSS. Residue Asp-144 is part of the active site.

It belongs to the GHMP kinase family. IspE subfamily.

It carries out the reaction 4-CDP-2-C-methyl-D-erythritol + ATP = 4-CDP-2-C-methyl-D-erythritol 2-phosphate + ADP + H(+). It participates in isoprenoid biosynthesis; isopentenyl diphosphate biosynthesis via DXP pathway; isopentenyl diphosphate from 1-deoxy-D-xylulose 5-phosphate: step 3/6. Catalyzes the phosphorylation of the position 2 hydroxy group of 4-diphosphocytidyl-2C-methyl-D-erythritol. The sequence is that of 4-diphosphocytidyl-2-C-methyl-D-erythritol kinase from Burkholderia pseudomallei (strain 1710b).